Here is a 109-residue protein sequence, read N- to C-terminus: Phosphoribosyl-ATP pyrophosphatase (109 aa).

Belongs to the PRA-PH family.

It is found in the cytoplasm. The catalysed reaction is 1-(5-phospho-beta-D-ribosyl)-ATP + H2O = 1-(5-phospho-beta-D-ribosyl)-5'-AMP + diphosphate + H(+). The protein operates within amino-acid biosynthesis; L-histidine biosynthesis; L-histidine from 5-phospho-alpha-D-ribose 1-diphosphate: step 2/9. The sequence is that of Phosphoribosyl-ATP pyrophosphatase from Alkalilimnicola ehrlichii (strain ATCC BAA-1101 / DSM 17681 / MLHE-1).